The sequence spans 181 residues: Shikimate kinase 2 (181 aa).

ATP is bound at residue 12–17; that stretch reads GCGKTT. Mg(2+)-binding residues include Thr-16 and Asp-32. Residues Asp-34, Arg-58, and Gly-79 each contribute to the substrate site. Residues 112 to 126 form an LID domain region; sequence EAEPEADLRPTLTGK. Position 120 (Arg-120) interacts with ATP. Substrate is bound at residue Arg-139.

Belongs to the shikimate kinase family. AroL subfamily. In terms of assembly, monomer. Requires Mg(2+) as cofactor.

It is found in the cytoplasm. It catalyses the reaction shikimate + ATP = 3-phosphoshikimate + ADP + H(+). It participates in metabolic intermediate biosynthesis; chorismate biosynthesis; chorismate from D-erythrose 4-phosphate and phosphoenolpyruvate: step 5/7. Its function is as follows. Catalyzes the specific phosphorylation of the 3-hydroxyl group of shikimic acid using ATP as a cosubstrate. This is Shikimate kinase 2 from Salmonella dublin (strain CT_02021853).